Here is a 162-residue protein sequence, read N- to C-terminus: Allantoicase (162 aa).

It belongs to the allantoicase family. In terms of assembly, homohexamer. In terms of tissue distribution, expressed in zygote.

It catalyses the reaction allantoate + H2O = (S)-ureidoglycolate + urea. Its pathway is nitrogen metabolism; (S)-allantoin degradation; (S)-ureidoglycolate from allantoate (aminidohydrolase route): step 1/1. In terms of biological role, catalyzes the degradation of allantoate to (-)-ureidoglycolate and (+)-ureidoglycolate to glyoxylate. In Chlamydomonas reinhardtii (Chlamydomonas smithii), this protein is Allantoicase.